The following is a 209-amino-acid chain: Thiamine-phosphate synthase (209 aa).

4-amino-2-methyl-5-(diphosphooxymethyl)pyrimidine contacts are provided by residues 40–44 (QLREK) and asparagine 72. Mg(2+) is bound by residues aspartate 73 and aspartate 92. Serine 111 serves as a coordination point for 4-amino-2-methyl-5-(diphosphooxymethyl)pyrimidine. 137-139 (TNS) contributes to the 2-[(2R,5Z)-2-carboxy-4-methylthiazol-5(2H)-ylidene]ethyl phosphate binding site. Lysine 140 contributes to the 4-amino-2-methyl-5-(diphosphooxymethyl)pyrimidine binding site. Residues glycine 167 and 187–188 (IS) each bind 2-[(2R,5Z)-2-carboxy-4-methylthiazol-5(2H)-ylidene]ethyl phosphate.

The protein belongs to the thiamine-phosphate synthase family. Mg(2+) serves as cofactor.

It catalyses the reaction 2-[(2R,5Z)-2-carboxy-4-methylthiazol-5(2H)-ylidene]ethyl phosphate + 4-amino-2-methyl-5-(diphosphooxymethyl)pyrimidine + 2 H(+) = thiamine phosphate + CO2 + diphosphate. The catalysed reaction is 2-(2-carboxy-4-methylthiazol-5-yl)ethyl phosphate + 4-amino-2-methyl-5-(diphosphooxymethyl)pyrimidine + 2 H(+) = thiamine phosphate + CO2 + diphosphate. The enzyme catalyses 4-methyl-5-(2-phosphooxyethyl)-thiazole + 4-amino-2-methyl-5-(diphosphooxymethyl)pyrimidine + H(+) = thiamine phosphate + diphosphate. It participates in cofactor biosynthesis; thiamine diphosphate biosynthesis; thiamine phosphate from 4-amino-2-methyl-5-diphosphomethylpyrimidine and 4-methyl-5-(2-phosphoethyl)-thiazole: step 1/1. Condenses 4-methyl-5-(beta-hydroxyethyl)thiazole monophosphate (THZ-P) and 2-methyl-4-amino-5-hydroxymethyl pyrimidine pyrophosphate (HMP-PP) to form thiamine monophosphate (TMP). In Clostridium tetani (strain Massachusetts / E88), this protein is Thiamine-phosphate synthase.